The following is a 201-amino-acid chain: UPF0301 protein MMAR_0053 (201 aa).

Belongs to the UPF0301 (AlgH) family.

In Mycobacterium marinum (strain ATCC BAA-535 / M), this protein is UPF0301 protein MMAR_0053.